We begin with the raw amino-acid sequence, 178 residues long: Large ribosomal subunit protein uL5 (178 aa).

It belongs to the universal ribosomal protein uL5 family. As to quaternary structure, part of the 50S ribosomal subunit; part of the 5S rRNA/L5/L18/L25 subcomplex. Contacts the 5S rRNA and the P site tRNA. Forms a bridge to the 30S subunit in the 70S ribosome.

In terms of biological role, this is one of the proteins that bind and probably mediate the attachment of the 5S RNA into the large ribosomal subunit, where it forms part of the central protuberance. In the 70S ribosome it contacts protein S13 of the 30S subunit (bridge B1b), connecting the 2 subunits; this bridge is implicated in subunit movement. Contacts the P site tRNA; the 5S rRNA and some of its associated proteins might help stabilize positioning of ribosome-bound tRNAs. This is Large ribosomal subunit protein uL5 from Acinetobacter baylyi (strain ATCC 33305 / BD413 / ADP1).